Consider the following 121-residue polypeptide: Small ribosomal subunit protein uS13 (121 aa).

Positions 91-121 are disordered; the sequence is HKRGLPVRGQRTRTNARTRKGPRRAAASLKK.

It belongs to the universal ribosomal protein uS13 family. In terms of assembly, part of the 30S ribosomal subunit. Forms a loose heterodimer with protein S19. Forms two bridges to the 50S subunit in the 70S ribosome.

Located at the top of the head of the 30S subunit, it contacts several helices of the 16S rRNA. In the 70S ribosome it contacts the 23S rRNA (bridge B1a) and protein L5 of the 50S subunit (bridge B1b), connecting the 2 subunits; these bridges are implicated in subunit movement. Contacts the tRNAs in the A and P-sites. The polypeptide is Small ribosomal subunit protein uS13 (Bordetella avium (strain 197N)).